Reading from the N-terminus, the 81-residue chain is Conotoxin ArMKLT2-01 (81 aa).

An N-terminal signal peptide occupies residues 1-19; that stretch reads MKLTCVIIVVALFLTACHA. Residues 20-43 constitute a propeptide that is removed on maturation; sequence KDKQEHPAVRGSDDMQDSEDLKLA. Intrachain disulfides connect Cys46/Cys61, Cys53/Cys65, and Cys60/Cys74.

This sequence belongs to the conotoxin O1 superfamily. As to expression, expressed by the venom duct.

Its subcellular location is the secreted. This chain is Conotoxin ArMKLT2-01, found in Conus arenatus (Sand-dusted cone).